We begin with the raw amino-acid sequence, 122 residues long: Venom protein 7.1 (122 aa).

The N-terminal stretch at 1-19 is a signal peptide; sequence MRFSIISASLVLIFANVKA.

In terms of processing, contains 3 disulfide bonds. In terms of tissue distribution, expressed by the venom gland.

Its subcellular location is the secreted. This Lychas mucronatus (Chinese swimming scorpion) protein is Venom protein 7.1.